The following is a 409-amino-acid chain: Elongation factor Tu, chloroplastic (409 aa).

Residues 10-214 (KPHVNIGTIG…TVDAYIPTPE (205 aa)) enclose the tr-type G domain. The segment at 19–26 (GHVDHGKT) is G1. Position 19–26 (19–26 (GHVDHGKT)) interacts with GTP. Threonine 26 is a Mg(2+) binding site. The G2 stretch occupies residues 60 to 64 (GITIN). Residues 81–84 (DCPG) are G3. GTP-binding positions include 81-85 (DCPGH) and 136-139 (NKED). A G4 region spans residues 136-139 (NKED). The tract at residues 174 to 176 (SAL) is G5.

This sequence belongs to the TRAFAC class translation factor GTPase superfamily. Classic translation factor GTPase family. EF-Tu/EF-1A subfamily.

The protein localises to the plastid. It is found in the chloroplast. It catalyses the reaction GTP + H2O = GDP + phosphate + H(+). Its function is as follows. GTP hydrolase that promotes the GTP-dependent binding of aminoacyl-tRNA to the A-site of ribosomes during protein biosynthesis. In Pleurastrum terricola (Filamentous green alga), this protein is Elongation factor Tu, chloroplastic (tufA).